The sequence spans 491 residues: Protein nucleotidyltransferase YdiU (491 aa).

8 residues coordinate ATP: Gly-94, Gly-96, Arg-97, Lys-117, Asp-129, Gly-130, Arg-180, and Arg-187. Asp-256 serves as the catalytic Proton acceptor. The Mg(2+) site is built by Asn-257 and Asp-266. An ATP-binding site is contributed by Asp-266.

The protein belongs to the SELO family. The cofactor is Mg(2+). It depends on Mn(2+) as a cofactor.

The catalysed reaction is L-seryl-[protein] + ATP = 3-O-(5'-adenylyl)-L-seryl-[protein] + diphosphate. It carries out the reaction L-threonyl-[protein] + ATP = 3-O-(5'-adenylyl)-L-threonyl-[protein] + diphosphate. The enzyme catalyses L-tyrosyl-[protein] + ATP = O-(5'-adenylyl)-L-tyrosyl-[protein] + diphosphate. It catalyses the reaction L-histidyl-[protein] + UTP = N(tele)-(5'-uridylyl)-L-histidyl-[protein] + diphosphate. The catalysed reaction is L-seryl-[protein] + UTP = O-(5'-uridylyl)-L-seryl-[protein] + diphosphate. It carries out the reaction L-tyrosyl-[protein] + UTP = O-(5'-uridylyl)-L-tyrosyl-[protein] + diphosphate. In terms of biological role, nucleotidyltransferase involved in the post-translational modification of proteins. It can catalyze the addition of adenosine monophosphate (AMP) or uridine monophosphate (UMP) to a protein, resulting in modifications known as AMPylation and UMPylation. The sequence is that of Protein nucleotidyltransferase YdiU from Brevibacillus brevis (strain 47 / JCM 6285 / NBRC 100599).